Consider the following 159-residue polypeptide: MAALIVSRLARRGWLWKLPLATRREFWSRSRKEKEPVVAETVEEVKKEPVLVCPPLRSRAYTPPSDLQSRLESHIKEVLGSSLPNNWQDISLDDGHMKFRLLAGLADGLGHAVPNSRLHQMCRVRDVLDFYNVPVQDKSKFDELVASNLPPNLKISWSY.

This sequence belongs to the mitochondrion-specific ribosomal protein mL50 family. Component of the mitochondrial ribosome large subunit (39S) which comprises a 16S rRNA and about 50 distinct proteins.

The protein resides in the mitochondrion. This is Large ribosomal subunit protein mL50 (Mrpl50) from Mus musculus (Mouse).